The sequence spans 458 residues: Tubulin beta chain (458 aa).

GTP is bound by residues Gln11, Glu69, Ser138, Gly142, Thr143, Gly144, Asn204, and Asn226. Residue Glu69 coordinates Mg(2+). Residues 426-458 (EAATVEGEEEEDEYAEGGVVNGDQSYDEPYQAA) are disordered. The span at 431–440 (EGEEEEDEYA) shows a compositional bias: acidic residues.

Belongs to the tubulin family. In terms of assembly, dimer of alpha and beta chains. A typical microtubule is a hollow water-filled tube with an outer diameter of 25 nm and an inner diameter of 15 nM. Alpha-beta heterodimers associate head-to-tail to form protofilaments running lengthwise along the microtubule wall with the beta-tubulin subunit facing the microtubule plus end conferring a structural polarity. Microtubules usually have 13 protofilaments but different protofilament numbers can be found in some organisms and specialized cells. Requires Mg(2+) as cofactor.

It is found in the cytoplasm. Its subcellular location is the cytoskeleton. Its function is as follows. Tubulin is the major constituent of microtubules, a cylinder consisting of laterally associated linear protofilaments composed of alpha- and beta-tubulin heterodimers. Microtubules grow by the addition of GTP-tubulin dimers to the microtubule end, where a stabilizing cap forms. Below the cap, tubulin dimers are in GDP-bound state, owing to GTPase activity of alpha-tubulin. The protein is Tubulin beta chain (TUBB1) of Pyropia yezoensis (Susabi-nori).